The primary structure comprises 148 residues: Prefoldin subunit 2 (148 aa).

Positions 87-114 (KDGLEEVVRKLYETLEKKKKDLTEFEAK) form a coiled coil. The segment covering 122-134 (QEDNKEGGNKKEG) has biased composition (basic and acidic residues). A disordered region spans residues 122–148 (QEDNKEGGNKKEGNAQGVLVGAASSSQ).

The protein belongs to the prefoldin subunit beta family. As to quaternary structure, heterohexamer of two PFD-alpha type and four PFD-beta type subunits forming prefoldin co-chaperone complex. Interacts with LSM8, a specific subunit of the LSM2-8 complex, which is a core component of the spliceosome.

It localises to the cytoplasm. The protein resides in the nucleus. Binds specifically to cytosolic chaperonin (c-CPN) and transfers target proteins to it. Binds to nascent polypeptide chain and promotes folding in an environment in which there are many competing pathways for nonnative proteins. Together with other chaperonins, contribute to the regulation of gene expression by modulating the spliceosome function on pre-mRNA splicing post-transcriptionally by acting as a co-chaperone of Hsp90 to control levels of LSM8. Required for microtubules (MTs) organization and dynamicity. Involved in the process leading to microtubules dissociation in response to gibberellic acid (GA) probably due to the DELLA proteins-mediated translocation of the prefoldin co-chaperone complex from the cytoplasm to the nucleus. The chain is Prefoldin subunit 2 from Arabidopsis thaliana (Mouse-ear cress).